The chain runs to 343 residues: N-acetyl-gamma-glutamyl-phosphate reductase (343 aa).

C146 is a catalytic residue.

The protein belongs to the NAGSA dehydrogenase family. Type 1 subfamily.

Its subcellular location is the cytoplasm. It catalyses the reaction N-acetyl-L-glutamate 5-semialdehyde + phosphate + NADP(+) = N-acetyl-L-glutamyl 5-phosphate + NADPH + H(+). It functions in the pathway amino-acid biosynthesis; L-arginine biosynthesis; N(2)-acetyl-L-ornithine from L-glutamate: step 3/4. Functionally, catalyzes the NADPH-dependent reduction of N-acetyl-5-glutamyl phosphate to yield N-acetyl-L-glutamate 5-semialdehyde. The polypeptide is N-acetyl-gamma-glutamyl-phosphate reductase (Arthrobacter sp. (strain FB24)).